The primary structure comprises 378 residues: AA13 family lytic polysaccharide monooxygenase A (378 aa).

The first 17 residues, 1–17, serve as a signal peptide directing secretion; the sequence is MKWSVIQALALASGVQA. His18 serves as a coordination point for Cu(2+). The residue at position 18 (His18) is a Methylhistidine. One can recognise a Chitin-binding type-4 domain in the interval 18–244; sequence HGYLTFPMSR…PQIYLTCADI (227 aa). Cystine bridges form between Cys39/Cys42, Cys65/Cys241, Cys101/Cys199, Cys117/Cys144, Cys152/Cys160, Cys166/Cys172, and Cys180/Cys188. His108 provides a ligand contact to Cu(2+). N-linked (GlcNAc...) asparagine glycosylation occurs at Asn221. Tyr238 is a binding site for Cu(2+). Positions 250-263 are enriched in low complexity; it reads DSQSPPTTTTTSTP. The disordered stretch occupies residues 250-272; sequence DSQSPPTTTTTSTPASPPPTSCA. A CBM20 domain is found at 272–378; sequence ATPAASVAVT…GTATVDTAWK (107 aa).

This sequence belongs to the polysaccharide monooxygenase AA13 family. Cu(2+) serves as cofactor. O-mannosylated.

It localises to the secreted. The catalysed reaction is starch + reduced acceptor + O2 = D-glucono-1,5-lactone-terminated malto-oligosaccharides + short-chain malto-oligosaccharides + acceptor + H2O.. Its activity is regulated as follows. Activity is inhibited by both beta-cyclodextrin or amylose that block the access to the active site. In terms of biological role, starch-active lytic polysaccharide monooxygenase that oxidizes the C1 position of starch substrates. Catalysis by LPMOs requires the reduction of the active-site copper from Cu(II) to Cu(I) by a reducing agent and H(2)O(2) or O(2) as a cosubstrate. This Pyricularia oryzae (strain 70-15 / ATCC MYA-4617 / FGSC 8958) (Rice blast fungus) protein is AA13 family lytic polysaccharide monooxygenase A.